The following is a 284-amino-acid chain: Pantothenate synthetase (284 aa).

Residue 34–41 (MGALHAGH) participates in ATP binding. H41 acts as the Proton donor in catalysis. Q65 contacts (R)-pantoate. Position 65 (Q65) interacts with beta-alanine. 151 to 154 (GEKD) is an ATP binding site. Q157 contributes to the (R)-pantoate binding site. ATP contacts are provided by residues L180 and 188-191 (MSSR).

This sequence belongs to the pantothenate synthetase family. Homodimer.

Its subcellular location is the cytoplasm. The enzyme catalyses (R)-pantoate + beta-alanine + ATP = (R)-pantothenate + AMP + diphosphate + H(+). It participates in cofactor biosynthesis; (R)-pantothenate biosynthesis; (R)-pantothenate from (R)-pantoate and beta-alanine: step 1/1. Catalyzes the condensation of pantoate with beta-alanine in an ATP-dependent reaction via a pantoyl-adenylate intermediate. The sequence is that of Pantothenate synthetase from Paramagnetospirillum magneticum (strain ATCC 700264 / AMB-1) (Magnetospirillum magneticum).